The sequence spans 816 residues: Protein kinase C-binding protein NELL2 (816 aa).

An N-terminal signal peptide occupies residues 1–21 (MESRVLLRTFCLIFGLGAVWG). N-linked (GlcNAc...) asparagine glycosylation is found at Asn-53, Asn-225, Asn-293, and Asn-298. One can recognise a Laminin G-like domain in the interval 64-228 (PRSIKASTAT…AQCPDLNRTC (165 aa)). Positions 272-331 (RTCTMKGTTYREFESWIDGCKNCTCLNGTIQCETLICPNPDCPLKSALAYVDGKCCKECK) constitute a VWFC 1 domain. Positions 397–439 (GYDFCSERHNCMENSICRNLNDRAVCSCRDGFRALREDNAYCE) constitute an EGF-like 1 domain. 3 disulfide bridges follow: Cys-401–Cys-413, Cys-407–Cys-422, and Cys-424–Cys-438. Asp-440, Ile-441, and Glu-443 together coordinate Ca(2+). In terms of domain architecture, EGF-like 2; calcium-binding spans 440–481 (DIDECAEGRHYCRENTMCVNTPGSFMCICKTGYIRIDDYSCT). 9 disulfides stabilise this stretch: Cys-444-Cys-457, Cys-451-Cys-466, Cys-468-Cys-480, Cys-486-Cys-499, Cys-493-Cys-508, Cys-510-Cys-521, Cys-525-Cys-535, Cys-529-Cys-541, and Cys-543-Cys-552. Ca(2+) is bound by residues Asn-459, Thr-460, and Ser-463. An EGF-like 3; calcium-binding domain is found at 482–522 (EHDECITNQHNCDENALCFNTVGGHNCVCKPGYTGNGTTCK). Asn-517 is a glycosylation site (N-linked (GlcNAc...) asparagine). The region spanning 523 to 553 (AFCKDGCRNGGACIAANVCACPQGFTGPSCE) is the EGF-like 4 domain. An O-linked (GlcNAc...) threonine glycan is attached at Thr-548. Ca(2+) is bound by residues Asp-555, Ile-556, and Glu-558. Residues 555–601 (DIDECSDGFVQCDSRANCINLPGWYHCECRDGYHDNGMFSPSGESCE) enclose the EGF-like 5; calcium-binding domain. 3 cysteine pairs are disulfide-bonded: Cys-559-Cys-572, Cys-566-Cys-581, and Cys-583-Cys-600. Residues Asn-574, Leu-575, and Trp-578 each coordinate Ca(2+). Residues Asp-602, Ile-603, and Glu-605 each contribute to the Ca(2+) site. The 36-residue stretch at 602 to 637 (DIDECGTGRHSCANDTICFNLDGGYDCRCPHGKNCT) folds into the EGF-like 6; calcium-binding domain. Cystine bridges form between Cys-606–Cys-619, Cys-613–Cys-628, and Cys-630–Cys-636. An N-linked (GlcNAc...) asparagine glycan is attached at Asn-615. Ca(2+) contacts are provided by Asn-621, Leu-622, and Gly-625. Residue Asn-635 is glycosylated (N-linked (GlcNAc...) asparagine). VWFC domains are found at residues 638-693 (GDCI…PECD) and 698-756 (SQCL…PRCV).

As to quaternary structure, homotrimer. Binds to PRKCB. Interacts with NICOL1; this interaction triggers epididymal differentiation. Interacts (via the EGF domains) with ROBO3 (via Fibronectin type-III 1 domain) with a 3:3 stoichiometry; this interaction promotes oligomerization of ROBO3 resulting in the repulsion of commissural axons in the midline.

Its subcellular location is the secreted. Plays multiple roles in neural tissues, regulates neuronal proliferation, survival, differentiation, polarization, as well as axon guidance and synaptic functions. Plays an important role in axon development during neuronal differentiation through the MAPK intracellular signaling pathway. Via binding to its receptor ROBO3, plays a role in axon guidance, functioning as a repulsive axon guidance cue that contributes to commissural axon guidance to the midline. Required for neuron survival through the modulation of MAPK signaling pathways too. Involved in the regulation of hypothalamic GNRH secretion and the control of puberty. In terms of biological role, epididymal-secreted protein that signals through a ROS1-pathway to regulate the epididymal initial segment (IS) maturation, sperm maturation and male fertility. The protein is Protein kinase C-binding protein NELL2 of Homo sapiens (Human).